A 155-amino-acid chain; its full sequence is Ribosomal RNA large subunit methyltransferase H (155 aa).

Residues Leu72, Gly103, and 122–127 (LSALTL) contribute to the S-adenosyl-L-methionine site.

The protein belongs to the RNA methyltransferase RlmH family. As to quaternary structure, homodimer.

It is found in the cytoplasm. The catalysed reaction is pseudouridine(1915) in 23S rRNA + S-adenosyl-L-methionine = N(3)-methylpseudouridine(1915) in 23S rRNA + S-adenosyl-L-homocysteine + H(+). Its function is as follows. Specifically methylates the pseudouridine at position 1915 (m3Psi1915) in 23S rRNA. The sequence is that of Ribosomal RNA large subunit methyltransferase H from Enterobacter sp. (strain 638).